Consider the following 98-residue polypeptide: Integration host factor subunit alpha (98 aa).

Over residues 53-69 (DLREKSERPGRNPKTGE) the composition is skewed to basic and acidic residues. A disordered region spans residues 53 to 73 (DLREKSERPGRNPKTGEDIPI).

It belongs to the bacterial histone-like protein family. Heterodimer of an alpha and a beta chain.

In terms of biological role, this protein is one of the two subunits of integration host factor, a specific DNA-binding protein that functions in genetic recombination as well as in transcriptional and translational control. The sequence is that of Integration host factor subunit alpha from Aliivibrio fischeri (strain ATCC 700601 / ES114) (Vibrio fischeri).